Reading from the N-terminus, the 385-residue chain is WD repeat-containing protein RUP1 (385 aa).

WD repeat units lie at residues 69–108 (TGSD…ESRD), 119–160 (CTPA…PVSE), 163–205 (EHGG…TLEE), 210–250 (GGGA…DPLI), 254–292 (GHTK…RVVR), 298–337 (VNSR…PVWV), and 348–385 (SDRR…GKQS).

Interacts with UVR8. Interacts directly with DHU1.

It is found in the nucleus. It localises to the cytoplasm. The protein localises to the cytosol. Functionally, functions in association with RUP2 as repressor of UV-B-induced photomorphogenesis mediated by UVR8 and HY5, likely in coordination with DHU1. Plays a crucial negative feedback regulatory role downstream of UVR8-COP1 to inhibit UVR8 function, balance UV-B-specific responses and ensure normal plant growth. Is involved in the regulation of photoperiodic flowering and vegetative development. The sequence is that of WD repeat-containing protein RUP1 from Arabidopsis thaliana (Mouse-ear cress).